The following is a 163-amino-acid chain: Nucleotide-binding protein Mmcs_0777 (163 aa).

The protein belongs to the YajQ family.

In terms of biological role, nucleotide-binding protein. In Mycobacterium sp. (strain MCS), this protein is Nucleotide-binding protein Mmcs_0777.